We begin with the raw amino-acid sequence, 115 residues long: UPF0102 protein SYO3AOP1_0546 (115 aa).

Belongs to the UPF0102 family.

The chain is UPF0102 protein SYO3AOP1_0546 from Sulfurihydrogenibium sp. (strain YO3AOP1).